A 71-amino-acid chain; its full sequence is Small ribosomal subunit protein bS21 (71 aa).

The protein belongs to the bacterial ribosomal protein bS21 family.

The sequence is that of Small ribosomal subunit protein bS21 from Marinobacter nauticus (strain ATCC 700491 / DSM 11845 / VT8) (Marinobacter aquaeolei).